We begin with the raw amino-acid sequence, 843 residues long: Elongation factor 2 (843 aa).

In terms of domain architecture, tr-type G spans 17–253 (HNIRNMSVIA…LWGENFFDPA (237 aa)). 26–33 (AHVDHGKS) provides a ligand contact to GTP. Residues T57 and T59 each carry the phosphothreonine modification. 158–161 (NKMD) contributes to the GTP binding site. H700 is modified (diphthamide).

This sequence belongs to the TRAFAC class translation factor GTPase superfamily. Classic translation factor GTPase family. EF-G/EF-2 subfamily. Phosphorylation by EF-2 kinase completely inactivates EF-2.

The protein localises to the cytoplasm. The catalysed reaction is GTP + H2O = GDP + phosphate + H(+). In terms of biological role, catalyzes the GTP-dependent ribosomal translocation step during translation elongation. During this step, the ribosome changes from the pre-translocational (PRE) to the post-translocational (POST) state as the newly formed A-site-bound peptidyl-tRNA and P-site-bound deacylated tRNA move to the P and E sites, respectively. Catalyzes the coordinated movement of the two tRNA molecules, the mRNA and conformational changes in the ribosome. This chain is Elongation factor 2, found in Beta vulgaris (Sugar beet).